Here is a 266-residue protein sequence, read N- to C-terminus: Undecaprenyl-diphosphatase (266 aa).

The next 8 helical transmembrane spans lie at 4–24 (LATI…PVSS), 41–61 (GSAA…LVAY), 79–99 (AVAF…VGAV), 108–128 (LESP…ILAI), 143–163 (MPLR…IPGV), 184–204 (AEFS…YSLW), 220–240 (IGLF…VAIV), and 243–263 (FGFA…LLWL).

This sequence belongs to the UppP family.

It is found in the cell inner membrane. It catalyses the reaction di-trans,octa-cis-undecaprenyl diphosphate + H2O = di-trans,octa-cis-undecaprenyl phosphate + phosphate + H(+). Catalyzes the dephosphorylation of undecaprenyl diphosphate (UPP). Confers resistance to bacitracin. In Sphingopyxis alaskensis (strain DSM 13593 / LMG 18877 / RB2256) (Sphingomonas alaskensis), this protein is Undecaprenyl-diphosphatase.